The following is a 613-amino-acid chain: Dihydroxy-acid dehydratase (613 aa).

Residue Asp-81 coordinates Mg(2+). Cys-122 serves as a coordination point for [2Fe-2S] cluster. Positions 123 and 124 each coordinate Mg(2+). Lys-124 bears the N6-carboxylysine mark. Residue Cys-195 coordinates [2Fe-2S] cluster. Mg(2+) is bound at residue Glu-491. Ser-517 (proton acceptor) is an active-site residue.

This sequence belongs to the IlvD/Edd family. As to quaternary structure, homodimer. Requires [2Fe-2S] cluster as cofactor. It depends on Mg(2+) as a cofactor.

The catalysed reaction is (2R)-2,3-dihydroxy-3-methylbutanoate = 3-methyl-2-oxobutanoate + H2O. It catalyses the reaction (2R,3R)-2,3-dihydroxy-3-methylpentanoate = (S)-3-methyl-2-oxopentanoate + H2O. Its pathway is amino-acid biosynthesis; L-isoleucine biosynthesis; L-isoleucine from 2-oxobutanoate: step 3/4. It participates in amino-acid biosynthesis; L-valine biosynthesis; L-valine from pyruvate: step 3/4. Functions in the biosynthesis of branched-chain amino acids. Catalyzes the dehydration of (2R,3R)-2,3-dihydroxy-3-methylpentanoate (2,3-dihydroxy-3-methylvalerate) into 2-oxo-3-methylpentanoate (2-oxo-3-methylvalerate) and of (2R)-2,3-dihydroxy-3-methylbutanoate (2,3-dihydroxyisovalerate) into 2-oxo-3-methylbutanoate (2-oxoisovalerate), the penultimate precursor to L-isoleucine and L-valine, respectively. This Photobacterium profundum (strain SS9) protein is Dihydroxy-acid dehydratase.